Here is a 164-residue protein sequence, read N- to C-terminus: T-cell surface glycoprotein CD3 zeta chain (164 aa).

Positions 1 to 21 (MKWKALFTAAILQAQLPITEA) are cleaved as a signal peptide. At 22–30 (QSFGLLDPK) the chain is on the extracellular side. The chain crosses the membrane as a helical span at residues 31-51 (LCYLLDGILFIYGVILTALFL). Topologically, residues 52 to 164 (RVKFSRSADA…ALHMQALPPR (113 aa)) are cytoplasmic. Ser58 carries the post-translational modification Phosphoserine. ITAM domains are found at residues 61–89 (APAYQQGQNQLYNELNLGRREEYDVLDKR), 100–128 (PQRRKNPQEGLYNELQKDKMAEAYSEIGM), and 131–159 (ERRRGKGHDGLYQGLSTATKDTYDALHMQ). Phosphotyrosine occurs at positions 64, 72, 83, 111, 123, 142, and 153. Residues 83–96 (YDVLDKRRGRDPEM) are compositionally biased toward basic and acidic residues. Residues 83–111 (YDVLDKRRGRDPEMGGKPQRRKNPQEGLY) form a disordered region. The segment at 128 to 154 (MKGERRRGKGHDGLYQGLSTATKDTYD) is disordered.

Belongs to the CD3Z/FCER1G family. As to quaternary structure, the TCR-CD3 complex is composed of a CD3D/CD3E and a CD3G/CD3E heterodimers that preferentially associate with TCRalpha and TCRbeta, respectively, to form TCRalpha/CD3E/CD3G and TCRbeta/CD3G/CD3E trimers. In turn, the hexamer interacts with CD3Z homodimer to form the TCR-CD3 complex. Alternatively, TCRalpha and TCRbeta can be replaced by TCRgamma and TCRdelta. Interacts with SLA. Interacts with TRAT1. Interacts with DOCK2. Interacts with SLA2. Interacts with SHB. Interacts with ZAP70. Interacts (tyrosine phosphorylated) with SHC1 (via SH2 domain). Interacts with PTPRC. Interacts with CRK; this interaction regulates CD3Z phosphorylation. Interacts (on T cell side) with CD81, ICAM1 and CD9 at immunological synapses between antigen-presenting cells and T cells. Interacts with CD160. Interacts with LY6E. The signaling subunit of immunoglobulin gamma (IgG) Fc receptor complex. As a homodimer or a heterodimer with FCER1G, associates with the ligand binding subunit FCGR3A (via transmembrane domain); this interaction is a prerequisite for Fc receptor complex expression on the cell surface. Interacts with CD5. (Microbial infection) Interacts with HIV-1 Nef; this interaction up-regulates the expression of the Fas ligand (FASLG) at the cell surface. In terms of assembly, (Microbial infection) Interacts with HIV-2 Nef protein; this interaction induces down-regulation of cell surface TCR/CD3 complexes. In terms of processing, phosphorylated on Tyr residues after T-cell receptor triggering by LCK in association with CD4/CD8. As to expression, CD3Z is expressed in normal lymphoid tissue and in peripheral blood mononuclear cells (PBMCs).

The protein resides in the cell membrane. Functionally, part of the TCR-CD3 complex present on T-lymphocyte cell surface that plays an essential role in adaptive immune response. When antigen presenting cells (APCs) activate T-cell receptor (TCR), TCR-mediated signals are transmitted across the cell membrane by the CD3 chains CD3D, CD3E, CD3G and CD3Z. All CD3 chains contain immunoreceptor tyrosine-based activation motifs (ITAMs) in their cytoplasmic domain. Upon TCR engagement, these motifs become phosphorylated by Src family protein tyrosine kinases LCK and FYN, resulting in the activation of downstream signaling pathways. CD3Z ITAMs phosphorylation creates multiple docking sites for the protein kinase ZAP70 leading to ZAP70 phosphorylation and its conversion into a catalytically active enzyme. Plays an important role in intrathymic T-cell differentiation. Additionally, participates in the activity-dependent synapse formation of retinal ganglion cells (RGCs) in both the retina and dorsal lateral geniculate nucleus (dLGN). In Homo sapiens (Human), this protein is T-cell surface glycoprotein CD3 zeta chain (CD247).